The sequence spans 423 residues: MADRSERSGVEILCVGTELLLGNILNGNARWLSEELATLGLPHFRQTVVGDNRDRLIALVQEIAQRSRVLIVTGGLGPTPDDLTTEAIAAAFSVPLEERVDVWSDIQEKARSRGRTPSPETRRQALLPVGAEVLWNPTGTAPGMIWTPVPGFSVLTFPGVPSEMKAMWKATAVPWFRSSGLSKGVFVSRLLHFWGIGESTLAEQVADLLEGVNPTVAPYAGRGEVKLRITACADVSSKAWVLVDQIEQELRQRTGNLCFGVDEDSLASVVLKRLGQTGQTLSVAESCTGGGLGAELTAVPGASSVMLGGVISYSNAVKRDLLSVPEDLLTQHGAVSAQVAEAMALGVRRLTGSDWALSITGIAGPDGGTPEKPVGLVFVGVAGPDGCSTEMLRLGPTRGREWIRIVSAGEVLNRLRLRLMVND.

The protein belongs to the CinA family.

The sequence is that of CinA-like protein from Synechococcus sp. (strain CC9311).